Consider the following 490-residue polypeptide: Acetyl-coenzyme A carboxylase carboxyl transferase subunit beta, chloroplastic (490 aa).

The CoA carboxyltransferase N-terminal domain occupies 228 to 490 (LWVQCENCYG…FKLHAFFPLN (263 aa)). Cysteine 232, cysteine 235, cysteine 251, and cysteine 254 together coordinate Zn(2+). A C4-type zinc finger spans residues 232 to 254 (CENCYGLNYKKLLKSKMNICDQC).

It belongs to the AccD/PCCB family. Acetyl-CoA carboxylase is a heterohexamer composed of biotin carboxyl carrier protein, biotin carboxylase and 2 subunits each of ACCase subunit alpha and ACCase plastid-coded subunit beta (accD). The cofactor is Zn(2+).

Its subcellular location is the plastid. The protein resides in the chloroplast stroma. The enzyme catalyses N(6)-carboxybiotinyl-L-lysyl-[protein] + acetyl-CoA = N(6)-biotinyl-L-lysyl-[protein] + malonyl-CoA. It participates in lipid metabolism; malonyl-CoA biosynthesis; malonyl-CoA from acetyl-CoA: step 1/1. Functionally, component of the acetyl coenzyme A carboxylase (ACC) complex. Biotin carboxylase (BC) catalyzes the carboxylation of biotin on its carrier protein (BCCP) and then the CO(2) group is transferred by the transcarboxylase to acetyl-CoA to form malonyl-CoA. The chain is Acetyl-coenzyme A carboxylase carboxyl transferase subunit beta, chloroplastic from Eucalyptus globulus subsp. globulus (Tasmanian blue gum).